The primary structure comprises 76 residues: Sec-independent protein translocase protein TatA (76 aa).

The helical transmembrane segment at 1-21 (MLGGLTGWHLLIILAVILLLF) threads the bilayer. Positions 44 to 57 (VNEMKKDGDKDKGE) are enriched in basic and acidic residues. The disordered stretch occupies residues 44 to 76 (VNEMKKDGDKDKGEGGSTAPATDTGASSEQNSK). Over residues 62-76 (APATDTGASSEQNSK) the composition is skewed to polar residues.

The protein belongs to the TatA/E family. As to quaternary structure, the Tat system comprises two distinct complexes: a TatABC complex, containing multiple copies of TatA, TatB and TatC subunits, and a separate TatA complex, containing only TatA subunits. Substrates initially bind to the TatABC complex, which probably triggers association of the separate TatA complex to form the active translocon.

The protein localises to the cell membrane. Part of the twin-arginine translocation (Tat) system that transports large folded proteins containing a characteristic twin-arginine motif in their signal peptide across membranes. TatA could form the protein-conducting channel of the Tat system. The sequence is that of Sec-independent protein translocase protein TatA from Leifsonia xyli subsp. xyli (strain CTCB07).